A 160-amino-acid chain; its full sequence is MAEKTYPMTLEEKEKLEKELEELKLVRRPEVVERIKIARSYGDLSENSEYEAAKDEQAFVEGQISSLETKIRYAEIVNSDAVAQDEVAIGKTVTIQEIGEDEEEVYIIVGSAGADAFAGKVSNESPIGQDLIGKKTGDTATIETPVGSYDVKILKVEKTA.

The stretch at 1-72 (MAEKTYPMTL…QISSLETKIR (72 aa)) forms a coiled coil.

It belongs to the GreA/GreB family.

In terms of biological role, necessary for efficient RNA polymerase transcription elongation past template-encoded arresting sites. The arresting sites in DNA have the property of trapping a certain fraction of elongating RNA polymerases that pass through, resulting in locked ternary complexes. Cleavage of the nascent transcript by cleavage factors such as GreA or GreB allows the resumption of elongation from the new 3'terminus. GreA releases sequences of 2 to 3 nucleotides. This Streptococcus pneumoniae (strain Hungary19A-6) protein is Transcription elongation factor GreA.